The primary structure comprises 104 residues: Flagellar hook-basal body complex protein FliE (104 aa).

This sequence belongs to the FliE family.

Its subcellular location is the bacterial flagellum basal body. The protein is Flagellar hook-basal body complex protein FliE of Enterobacter sp. (strain 638).